The sequence spans 298 residues: Tyrosine recombinase XerC (298 aa).

Residues 1 to 84 (MNHIQEAFLN…TLRTFYEYWM (84 aa)) form the Core-binding (CB) domain. Residues 105-286 (YLPQFFYEEE…SNQQLRKVYL (182 aa)) enclose the Tyr recombinase domain. Catalysis depends on residues Arg-145, Lys-169, His-238, Arg-241, and His-264. The active-site O-(3'-phospho-DNA)-tyrosine intermediate is Tyr-273.

Belongs to the 'phage' integrase family. XerC subfamily. Forms a cyclic heterotetrameric complex composed of two molecules of XerC and two molecules of XerD.

It localises to the cytoplasm. In terms of biological role, site-specific tyrosine recombinase, which acts by catalyzing the cutting and rejoining of the recombining DNA molecules. The XerC-XerD complex is essential to convert dimers of the bacterial chromosome into monomers to permit their segregation at cell division. It also contributes to the segregational stability of plasmids. The protein is Tyrosine recombinase XerC of Staphylococcus aureus (strain bovine RF122 / ET3-1).